The primary structure comprises 309 residues: Cell division protein FtsQ (309 aa).

Residues 1-52 (MLALRGRRGKRVRYPADGVAEADEAFVLPRPLRRGVRFLISLGAGRIRFPNH) lie on the Cytoplasmic side of the membrane. The helical transmembrane segment at 53–74 (TGTVAAAAFMVATGLYGMSLGG) threads the bilayer. Residues 75-309 (HTQSFAQVST…KMLKAQEKRI (235 aa)) are Periplasmic-facing. One can recognise a POTRA domain in the interval 89–157 (FAIEDVRVSG…GTIEVVLKER (69 aa)).

Belongs to the FtsQ/DivIB family. FtsQ subfamily.

It localises to the cell inner membrane. In terms of biological role, essential cell division protein. The polypeptide is Cell division protein FtsQ (Rhizobium meliloti (strain 1021) (Ensifer meliloti)).